Here is a 91-residue protein sequence, read N- to C-terminus: Small ribosomal subunit protein uS19 (91 aa).

The protein belongs to the universal ribosomal protein uS19 family.

Its function is as follows. Protein S19 forms a complex with S13 that binds strongly to the 16S ribosomal RNA. In Laribacter hongkongensis (strain HLHK9), this protein is Small ribosomal subunit protein uS19.